Consider the following 113-residue polypeptide: Putative pterin-4-alpha-carbinolamine dehydratase (113 aa).

It belongs to the pterin-4-alpha-carbinolamine dehydratase family.

The catalysed reaction is (4aS,6R)-4a-hydroxy-L-erythro-5,6,7,8-tetrahydrobiopterin = (6R)-L-erythro-6,7-dihydrobiopterin + H2O. This chain is Putative pterin-4-alpha-carbinolamine dehydratase, found in Saccharophagus degradans (strain 2-40 / ATCC 43961 / DSM 17024).